We begin with the raw amino-acid sequence, 493 residues long: Transcript termination protein A18 (493 aa).

The 157-residue stretch at 100 to 256 folds into the Helicase ATP-binding domain; that stretch reads MIESKRPLYI…NSIINIAKLS (157 aa). 113-120 provides a ligand contact to ATP; that stretch reads LACGFGKT. Positions 206 to 209 match the DESH box motif; the sequence is DESH.

It belongs to the helicase family. Poxviruses subfamily. In terms of assembly, interacts with G2. Might be part of a transcription complex composed at least of G2, A18, and H5.

The protein localises to the virion. Its function is as follows. DNA helicase which seems to act as a postreplicative transcription termination factor. Involved in ATP-dependent release of nascent RNA. Forms a stable complex with single-stranded DNA, and to a lesser extent RNA. The chain is Transcript termination protein A18 from Rabbitpox virus (strain Utrecht) (RPV).